The chain runs to 360 residues: 3-dehydroquinate synthase (360 aa).

NAD(+)-binding positions include aspartate 69–lysine 74, glycine 103–aspartate 107, threonine 127–threonine 128, lysine 140, lysine 149, and threonine 167–threonine 170. The Zn(2+) site is built by glutamate 182, histidine 246, and histidine 263.

Belongs to the sugar phosphate cyclases superfamily. Dehydroquinate synthase family. It depends on Co(2+) as a cofactor. Zn(2+) serves as cofactor. The cofactor is NAD(+).

The protein localises to the cytoplasm. The enzyme catalyses 7-phospho-2-dehydro-3-deoxy-D-arabino-heptonate = 3-dehydroquinate + phosphate. It participates in metabolic intermediate biosynthesis; chorismate biosynthesis; chorismate from D-erythrose 4-phosphate and phosphoenolpyruvate: step 2/7. Its function is as follows. Catalyzes the conversion of 3-deoxy-D-arabino-heptulosonate 7-phosphate (DAHP) to dehydroquinate (DHQ). The sequence is that of 3-dehydroquinate synthase from Vesicomyosocius okutanii subsp. Calyptogena okutanii (strain HA).